A 209-amino-acid polypeptide reads, in one-letter code: Transcription factor atf31 (209 aa).

The span at 90–103 (SKSPSIISEASHNS) shows a compositional bias: polar residues. The interval 90 to 133 (SKSPSIISEASHNSPSRELDDSGDENTSKLTGTKQSMLKARNRQ) is disordered. The 64-residue stretch at 121–184 (GTKQSMLKAR…IKLRTLVFAH (64 aa)) folds into the bZIP domain. A basic motif region spans residues 123–161 (KQSMLKARNRQAAQKCRIKKKKYLQTLQDQVNYYTSENK). Residues 163–177 (LLQSANDLREEIIKL) form a leucine-zipper region.

It belongs to the bZIP family.

The protein resides in the nucleus. The polypeptide is Transcription factor atf31 (atf31) (Schizosaccharomyces pombe (strain 972 / ATCC 24843) (Fission yeast)).